Here is a 2089-residue protein sequence, read N- to C-terminus: Rho GTPase-activating protein 32 (2089 aa).

The segment at 24–52 is disordered; it reads TQLTDGDEEEREESFRKMKSSIHSEEDDF. In terms of domain architecture, PX; atypical spans 131–245; the sequence is GSIQLSLSEE…LTWMEIDNKG (115 aa). Positions 259 to 321 constitute an SH3 domain; that stretch reads PAVGAAHVIK…PGHCVELINQ (63 aa). The region spanning 372-567 is the Rho-GAP domain; it reads CDLGEHLLNS…FILNHVDVLF (196 aa). 4 positions are modified to phosphoserine: Ser706, Ser709, Ser732, and Ser738. A compositionally biased stretch (basic and acidic residues) spans 828–837; that stretch reads KLSPSKKDAE. A disordered region spans residues 828–858; the sequence is KLSPSKKDAEAGGSQSQTPGSTASSEPVSPV. The segment covering 840-854 has biased composition (polar residues); that stretch reads GSQSQTPGSTASSEP. Phosphoserine is present on residues Ser852, Ser856, Ser892, and Ser952. 3 disordered regions span residues 955–1037, 1119–1141, and 1154–1197; these read QLQL…PPPP, CNQP…TDSG, and LHRN…SVST. 2 stretches are compositionally biased toward polar residues: residues 998–1014 and 1132–1141; these read LSSQ…QTGA and PTQSNTTDSG. Positions 1175–1191 are enriched in basic and acidic residues; the sequence is DSEKSDDHGSFPEDHAG. Ser1206 is subject to Phosphoserine. Residues 1221 to 1368 are disordered; sequence GTSVDKPHHS…GDPAPIFLSD (148 aa). Basic and acidic residues predominate over residues 1225–1235; it reads DKPHHSSELTD. Low complexity predominate over residues 1262 to 1275; that stretch reads TATMAYMMATPARA. Residues 1395–1714 form an interaction with GAB2 region; sequence RAPPLHLRAE…YNYAGLPPRP (320 aa). An asymmetric dimethylarginine mark is found at Arg1526 and Arg1536. A Phosphoserine modification is found at Ser1588. Residues 1688–2089 form an interaction with FYN region; the sequence is SSRDFAFYNP…PHPDTQIHAE (402 aa). Disordered regions lie at residues 1801–1865 and 1881–2002; these read PGKT…QSSL and RAHQ…LERD. Over residues 1826–1841 the composition is skewed to basic and acidic residues; that stretch reads GDERFYRKHPESEFDR. Polar residues predominate over residues 1850 to 1865; the sequence is STQAEKPSLPQKQSSL. The segment covering 1881–1892 has biased composition (basic and acidic residues); sequence RAHQEASHRQLC. Over residues 1918-1939 the composition is skewed to polar residues; that stretch reads SEPSNYHNSGKYMTSGQGSLTL. Basic and acidic residues-rich tracts occupy residues 1940–1954 and 1961–1975; these read NHKE…DRPR and PEKH…EEHF. Arg2039 carries the post-translational modification Omega-N-methylarginine.

The protein belongs to the PX domain-containing GAP family. In terms of assembly, interacts with NTRK1 (via cytoplasmic domain); the interaction is independent of the phosphorylation state of NTRK1. Interacts with SHC3 (via SH2 domain). Interacts with RASA1 (via SH3 domain); the interaction is necessary for the Ras activation and cell transforming activities of ARHGAP32. Interacts with GAB1 and GAB2. Interacts with CRK and CRKL. Found in a complex with CRKL and BCAR1; upon EGF stimulation BCAR1 may be replaced by EGFR. Interacts with NCK1 (via SH3 domain); NCK1 recruits phosphorylated BCAR1 to the complex. Isoform 2 interacts with FYN; the interaction appears to be dependent on tyrosine phosphorylation of ARHGAP32. Interacts with EGFR; the interaction requires EGF stimulation and is increased by SHC3. Interacts with CDC42; the interaction requires constitutively active CDC42. Interacts with CTNNB1, DLG4, CDH2 and GRIN2B. Interacts with GPHN. Post-translationally, isoform 2 is phosphorylated on multiple tyrosine residues by FYN. Phosphorylated tyrosine residues undergo dephosphorylation after stimulation of NMDA receptors. Phosphorylated in vitro by CaMK2 in the presence of calmodulin and calcium; which inhibits GAP activity. Isoform 1 and isoform 2 are highly expressed in brain, specially in cortex, corpus striatum, hippocampus and thalamus. Low levels in cerebellum, colon, small intestine, and kidney.

The protein localises to the postsynaptic density. It is found in the cell projection. Its subcellular location is the dendritic spine. The protein resides in the cytoplasm. It localises to the cell cortex. The protein localises to the endosome membrane. It is found in the golgi apparatus membrane. Its subcellular location is the endoplasmic reticulum membrane. The protein resides in the membrane. Its function is as follows. GTPase-activating protein (GAP) promoting GTP hydrolysis on RHOA, CDC42 and RAC1 small GTPases. May be involved in the differentiation of neuronal cells during the formation of neurite extensions. Involved in NMDA receptor activity-dependent actin reorganization in dendritic spines. May mediate cross-talks between Ras- and Rho-regulated signaling pathways in cell growth regulation. Isoform 2 has higher GAP activity. This Mus musculus (Mouse) protein is Rho GTPase-activating protein 32 (Arhgap32).